Consider the following 159-residue polypeptide: NADH-quinone oxidoreductase subunit I (159 aa).

4Fe-4S ferredoxin-type domains follow at residues 51–80 (RRYESGEERCIACKLCEAICPAQAIVIEAD) and 90–119 (TRYDIDMTKCIYCGLCQEACPVDAIVEGPN). Residues C60, C63, C66, C70, C99, C102, C105, and C109 each contribute to the [4Fe-4S] cluster site.

Belongs to the complex I 23 kDa subunit family. NDH-1 is composed of 14 different subunits. Subunits NuoA, H, J, K, L, M, N constitute the membrane sector of the complex. It depends on [4Fe-4S] cluster as a cofactor.

Its subcellular location is the cell inner membrane. The enzyme catalyses a quinone + NADH + 5 H(+)(in) = a quinol + NAD(+) + 4 H(+)(out). NDH-1 shuttles electrons from NADH, via FMN and iron-sulfur (Fe-S) centers, to quinones in the respiratory chain. The immediate electron acceptor for the enzyme in this species is believed to be ubiquinone. Couples the redox reaction to proton translocation (for every two electrons transferred, four hydrogen ions are translocated across the cytoplasmic membrane), and thus conserves the redox energy in a proton gradient. The polypeptide is NADH-quinone oxidoreductase subunit I (Rickettsia akari (strain Hartford)).